The chain runs to 519 residues: Protein nucleotidyltransferase YdiU (519 aa).

ATP contacts are provided by Gly101, Gly103, Arg104, Lys123, Asp135, Gly136, Arg193, and Arg200. Asp271 acts as the Proton acceptor in catalysis. 2 residues coordinate Mg(2+): Asn272 and Asp281. Asp281 is a binding site for ATP.

This sequence belongs to the SELO family. It depends on Mg(2+) as a cofactor. Requires Mn(2+) as cofactor.

The enzyme catalyses L-seryl-[protein] + ATP = 3-O-(5'-adenylyl)-L-seryl-[protein] + diphosphate. The catalysed reaction is L-threonyl-[protein] + ATP = 3-O-(5'-adenylyl)-L-threonyl-[protein] + diphosphate. It carries out the reaction L-tyrosyl-[protein] + ATP = O-(5'-adenylyl)-L-tyrosyl-[protein] + diphosphate. It catalyses the reaction L-histidyl-[protein] + UTP = N(tele)-(5'-uridylyl)-L-histidyl-[protein] + diphosphate. The enzyme catalyses L-seryl-[protein] + UTP = O-(5'-uridylyl)-L-seryl-[protein] + diphosphate. The catalysed reaction is L-tyrosyl-[protein] + UTP = O-(5'-uridylyl)-L-tyrosyl-[protein] + diphosphate. Nucleotidyltransferase involved in the post-translational modification of proteins. It can catalyze the addition of adenosine monophosphate (AMP) or uridine monophosphate (UMP) to a protein, resulting in modifications known as AMPylation and UMPylation. The chain is Protein nucleotidyltransferase YdiU from Tolumonas auensis (strain DSM 9187 / NBRC 110442 / TA 4).